The chain runs to 160 residues: NADH-quinone oxidoreductase subunit B (160 aa).

Residues C37, C38, C102, and C132 each coordinate [4Fe-4S] cluster.

It belongs to the complex I 20 kDa subunit family. As to quaternary structure, NDH-1 is composed of 14 different subunits. Subunits NuoB, C, D, E, F, and G constitute the peripheral sector of the complex. [4Fe-4S] cluster serves as cofactor.

The protein localises to the cell inner membrane. It catalyses the reaction a quinone + NADH + 5 H(+)(in) = a quinol + NAD(+) + 4 H(+)(out). NDH-1 shuttles electrons from NADH, via FMN and iron-sulfur (Fe-S) centers, to quinones in the respiratory chain. Couples the redox reaction to proton translocation (for every two electrons transferred, four hydrogen ions are translocated across the cytoplasmic membrane), and thus conserves the redox energy in a proton gradient. The polypeptide is NADH-quinone oxidoreductase subunit B (Cupriavidus pinatubonensis (strain JMP 134 / LMG 1197) (Cupriavidus necator (strain JMP 134))).